A 223-amino-acid polypeptide reads, in one-letter code: MIDLKIESSWREVLLDEFQKPYFNSLKEFLVGEKQKYTLYPHSSNIFAAFESTPFESVKVVILGQDPYHGVNQAHGLAFSVNDGVPPPPSLCNIFKELHDDIGCEIPKSGNLMSWAKEGVFLLNTVLSVRASEANSHKNRGWEVFTDTVIRLLSEKKENLVFILWGAPAGAKASLIDEKKHLILKAPHPSPLSSYRGFFGSKPFSKTDEYLISKGLKPVEWCI.

The Proton acceptor role is filled by Asp66.

This sequence belongs to the uracil-DNA glycosylase (UDG) superfamily. UNG family.

It localises to the cytoplasm. The enzyme catalyses Hydrolyzes single-stranded DNA or mismatched double-stranded DNA and polynucleotides, releasing free uracil.. Functionally, excises uracil residues from the DNA which can arise as a result of misincorporation of dUMP residues by DNA polymerase or due to deamination of cytosine. The chain is Uracil-DNA glycosylase from Sulfurimonas denitrificans (strain ATCC 33889 / DSM 1251) (Thiomicrospira denitrificans (strain ATCC 33889 / DSM 1251)).